We begin with the raw amino-acid sequence, 150 residues long: Suppressor of HU sensitivity involved in recombination protein 1 (150 aa).

As to quaternary structure, component of the SHU complex composed of at least CSM2, PSY3, SHU1 and SHU2.

It localises to the nucleus. Plays a role in a RAD51/RAD54-dependent homologous recombination repair (HRR) pathway to repair MMS-induced lesions during S-phase. In Saccharomyces cerevisiae (strain ATCC 204508 / S288c) (Baker's yeast), this protein is Suppressor of HU sensitivity involved in recombination protein 1 (SHU1).